A 344-amino-acid polypeptide reads, in one-letter code: 3-isopropylmalate dehydrogenase (344 aa).

74 to 87 is a binding site for NAD(+); that stretch reads GPKWDALPRKIRPE. Substrate contacts are provided by Arg-94, Arg-104, Arg-132, and Asp-217. Residues Asp-217, Asp-241, and Asp-245 each coordinate Mg(2+). 274–286 is an NAD(+) binding site; it reads GSAPDIAGKGIAN.

The protein belongs to the isocitrate and isopropylmalate dehydrogenases family. LeuB type 1 subfamily. Homodimer. It depends on Mg(2+) as a cofactor. Requires Mn(2+) as cofactor.

Its subcellular location is the cytoplasm. The enzyme catalyses (2R,3S)-3-isopropylmalate + NAD(+) = 4-methyl-2-oxopentanoate + CO2 + NADH. The protein operates within amino-acid biosynthesis; L-leucine biosynthesis; L-leucine from 3-methyl-2-oxobutanoate: step 3/4. Catalyzes the oxidation of 3-carboxy-2-hydroxy-4-methylpentanoate (3-isopropylmalate) to 3-carboxy-4-methyl-2-oxopentanoate. The product decarboxylates to 4-methyl-2 oxopentanoate. This is 3-isopropylmalate dehydrogenase (leuB) from Thermus aquaticus.